Consider the following 132-residue polypeptide: Ribosome-binding factor A (132 aa).

It belongs to the RbfA family. In terms of assembly, monomer. Binds 30S ribosomal subunits, but not 50S ribosomal subunits or 70S ribosomes.

The protein resides in the cytoplasm. Its function is as follows. One of several proteins that assist in the late maturation steps of the functional core of the 30S ribosomal subunit. Associates with free 30S ribosomal subunits (but not with 30S subunits that are part of 70S ribosomes or polysomes). Required for efficient processing of 16S rRNA. May interact with the 5'-terminal helix region of 16S rRNA. The polypeptide is Ribosome-binding factor A (Burkholderia vietnamiensis (strain G4 / LMG 22486) (Burkholderia cepacia (strain R1808))).